We begin with the raw amino-acid sequence, 65 residues long: Small ribosomal subunit protein bS21 (65 aa).

The segment covering 43 to 52 (EKKRVKEALA) has biased composition (basic and acidic residues). Positions 43–65 (EKKRVKEALARKRSRKKARKEQD) are disordered. The span at 53–65 (RKRSRKKARKEQD) shows a compositional bias: basic residues.

The protein belongs to the bacterial ribosomal protein bS21 family.

The protein is Small ribosomal subunit protein bS21 of Koribacter versatilis (strain Ellin345).